Reading from the N-terminus, the 129-residue chain is Small ribosomal subunit protein uS8 (129 aa).

This sequence belongs to the universal ribosomal protein uS8 family. As to quaternary structure, part of the 30S ribosomal subunit. Contacts proteins S5 and S12.

Functionally, one of the primary rRNA binding proteins, it binds directly to 16S rRNA central domain where it helps coordinate assembly of the platform of the 30S subunit. This is Small ribosomal subunit protein uS8 from Mesoplasma florum (strain ATCC 33453 / NBRC 100688 / NCTC 11704 / L1) (Acholeplasma florum).